Consider the following 565-residue polypeptide: Sulfite reductase [NADPH] hemoprotein beta-component (565 aa).

Cysteine 429, cysteine 435, cysteine 474, and cysteine 478 together coordinate [4Fe-4S] cluster. A siroheme-binding site is contributed by cysteine 478.

This sequence belongs to the nitrite and sulfite reductase 4Fe-4S domain family. As to quaternary structure, alpha(8)-beta(8). The alpha component is a flavoprotein, the beta component is a hemoprotein. The cofactor is siroheme. [4Fe-4S] cluster is required as a cofactor.

It catalyses the reaction hydrogen sulfide + 3 NADP(+) + 3 H2O = sulfite + 3 NADPH + 4 H(+). It participates in sulfur metabolism; hydrogen sulfide biosynthesis; hydrogen sulfide from sulfite (NADPH route): step 1/1. In terms of biological role, component of the sulfite reductase complex that catalyzes the 6-electron reduction of sulfite to sulfide. This is one of several activities required for the biosynthesis of L-cysteine from sulfate. The chain is Sulfite reductase [NADPH] hemoprotein beta-component from Shewanella putrefaciens (strain CN-32 / ATCC BAA-453).